The following is a 457-amino-acid chain: UPF0210 protein Sfum_2948 (457 aa).

Belongs to the UPF0210 family. As to quaternary structure, homodimer.

This Syntrophobacter fumaroxidans (strain DSM 10017 / MPOB) protein is UPF0210 protein Sfum_2948.